A 265-amino-acid chain; its full sequence is Cyclin-B2-5 (265 aa).

Belongs to the cyclin family. Cyclin AB subfamily.

This chain is Cyclin-B2-5 (CYCB2-5), found in Arabidopsis thaliana (Mouse-ear cress).